The chain runs to 605 residues: 9-cis-epoxycarotenoid dioxygenase NCED1, chloroplastic (605 aa).

A chloroplast-targeting transit peptide spans 1–16 (MATTTSHATNTWIKTK). Residues 55–89 (ILHFPKQSSNYQTPKNNTISHPKQENNNSSSSSTS) form a disordered region. Over residues 60 to 75 (KQSSNYQTPKNNTISH) the composition is skewed to polar residues. Over residues 80–89 (NNNSSSSSTS) the composition is skewed to low complexity. Positions 302, 351, 416, and 592 each coordinate Fe cation.

It belongs to the carotenoid oxygenase family. Fe(2+) is required as a cofactor. As to expression, expressed in developing and ripening fruits. Highly expressed in pulp. Observed in unpollinated ovaries (e.g. ovules, placenta and pericarp). Expressed in flowers.

Its subcellular location is the plastid. The protein resides in the chloroplast stroma. The catalysed reaction is a 9-cis-epoxycarotenoid + O2 = a 12'-apo-carotenal + 2-cis,4-trans-xanthoxin. The enzyme catalyses 9-cis-violaxanthin + O2 = (3S,5R,6S)-5,6-epoxy-3-hydroxy-5,6-dihydro-12'-apo-beta-caroten-12'-al + 2-cis,4-trans-xanthoxin. It catalyses the reaction 9'-cis-neoxanthin + O2 = (3S,5R,6R)-3,5-dihydroxy-6,7-didehydro-5,6-dihydro-12'-apo-beta-caroten-12'-al + 2-cis,4-trans-xanthoxin. The protein operates within plant hormone biosynthesis; abscisate biosynthesis. Its function is as follows. Has a 11,12(11',12') 9-cis epoxycarotenoid cleavage activity. Catalyzes the first step of abscisic-acid (ABA) biosynthesis from carotenoids. Required for ABA accumulation upon drought. Required for ABA-mediated regulation of anther/pollen development, including metabolism, cell wall modification and transcription level. Positive regulator of fruit ripening involved in the biosynthesis of abscisic acid (ABA); initiates ABA biosynthesis at the onset of fruit ripening. Modulates the degree of pigmentation and carotenoid composition as well as pectin catabolism during ripening and may regulate the ethylene production and action in climacteric tomato fruit. This is 9-cis-epoxycarotenoid dioxygenase NCED1, chloroplastic from Solanum lycopersicum (Tomato).